The chain runs to 443 residues: C4-dicarboxylate transport protein (443 aa).

A run of 9 helical transmembrane segments spans residues 17–37, 57–77, 92–112, 139–159, 161–181, 201–221, 234–254, 320–340, and 368–388; these read PFYS…ILLG, LVKM…IAGM, LYFL…ANVV, EQSI…GAFA, GDIL…AMVG, LVAI…AFTI, MLIG…LGAV, IYMT…LSWG, and AATL…ILGI.

The protein belongs to the dicarboxylate/amino acid:cation symporter (DAACS) (TC 2.A.23) family.

It localises to the cell inner membrane. Its function is as follows. Responsible for the transport of dicarboxylates such as succinate, fumarate, and malate from the periplasm across the membrane. In Rhizobium leguminosarum bv. trifolii (strain WSM2304), this protein is C4-dicarboxylate transport protein.